The chain runs to 256 residues: Thiazole synthase (256 aa).

The active-site Schiff-base intermediate with DXP is Lys95. 1-deoxy-D-xylulose 5-phosphate-binding positions include Gly156, 182-183 (AG), and 204-205 (NT).

Belongs to the ThiG family. Homotetramer. Forms heterodimers with either ThiH or ThiS.

Its subcellular location is the cytoplasm. The catalysed reaction is [ThiS sulfur-carrier protein]-C-terminal-Gly-aminoethanethioate + 2-iminoacetate + 1-deoxy-D-xylulose 5-phosphate = [ThiS sulfur-carrier protein]-C-terminal Gly-Gly + 2-[(2R,5Z)-2-carboxy-4-methylthiazol-5(2H)-ylidene]ethyl phosphate + 2 H2O + H(+). It functions in the pathway cofactor biosynthesis; thiamine diphosphate biosynthesis. Catalyzes the rearrangement of 1-deoxy-D-xylulose 5-phosphate (DXP) to produce the thiazole phosphate moiety of thiamine. Sulfur is provided by the thiocarboxylate moiety of the carrier protein ThiS. In vitro, sulfur can be provided by H(2)S. This Salmonella schwarzengrund (strain CVM19633) protein is Thiazole synthase.